Here is a 185-residue protein sequence, read N- to C-terminus: CD160 antigen (185 aa).

An N-terminal signal peptide occupies residues 1-27 (MQRILMAPGQSCCALAILLAIVNFQHG). The 109-residue stretch at 28-136 (GCIHVTSSAS…HGHFLSVLVT (109 aa)) folds into the Ig-like V-type domain. 2 disulfides stabilise this stretch: Cys47-Cys115 and Cys64-Cys71. N-linked (GlcNAc...) asparagine glycans are attached at residues Asn138 and Asn156. A lipid anchor (GPI-anchor amidated serine) is attached at Ser160. A propeptide spans 161 to 185 (SGFLQVKAWGMLVTSLVALQALYTL) (removed in mature form).

As to quaternary structure, homomultimer; disulfide-linked. Interacts with classical and non-classical MHC class I molecules. Interacts with TNFRSF14 (via cysteine-rich domain 1); this interaction is direct. Interacts with LCK and CD247/CD3 zeta chain. Expressed in resting and activated NK cell subsets (at protein level). Expressed in resting NKT cells (at protein level). Expressed in activated CD8+ T cells (at protein level). Highly expressed in intraepithelial lymphocyte (IEL) subsets, particularly in innate-like CD8A-positive IELs (at protein level).

The protein localises to the cell membrane. The protein resides in the secreted. Its function is as follows. Receptor on immune cells capable to deliver stimulatory or inhibitory signals that regulate cell activation and differentiation. Exists as a GPI-anchored and as a transmembrane form, each likely initiating distinct signaling pathways via phosphoinositol 3-kinase in activated NK cells and via LCK and CD247/CD3 zeta chain in activated T cells. Receptor for both classical and non-classical MHC class I molecules. Receptor or ligand for TNF superfamily member TNFRSF14, participating in bidirectional cell-cell contact signaling between antigen presenting cells and lymphocytes. Upon ligation of TNFRSF14, provides stimulatory signal to NK cells enhancing IFNG production and anti-tumor immune response. On activated CD4+ T cells, interacts with TNFRSF14 and down-regulates CD28 costimulatory signaling, restricting memory and alloantigen-specific immune response. In the context of bacterial infection, acts as a ligand for TNFRSF14 on epithelial cells, triggering the production of antimicrobial proteins and pro-inflammatory cytokines. Functionally, the soluble GPI-cleaved form, usually released by activated lymphocytes, might play an immune regulatory role by limiting lymphocyte effector functions. The chain is CD160 antigen from Mus musculus (Mouse).